Consider the following 334-residue polypeptide: MNLINEKLNNLENNAAKSPKEAVILLNMGGPNSLYEVGVFLKNMFDDPFILTIKNNFMRKMVGKMIINSRIEKSKKIYEKLGGKSPLTPITFALTERLNELDPSRFYTYAMRYTPPYASMVLQDLALKEVESLVFFSMYPQYSSTTTLSSFNDAFNALKSLETFRPKVRVIERFYADKKLNEIILNTILSTLNNRKSQDFVLIFSVHGLPKSIVDAGDTYQQECEHHVSLLKELMQQKNIPFKEVLLSYQSKLGPMKWLEPSTEELIEKHRKSNIIIYPLAFTIDNSETIYELDMQYRLMAERLAIKEYLVCPCLNDSIEFAKFIIERVKNLKE.

Residues histidine 207 and glutamate 288 each coordinate Fe cation.

The protein belongs to the ferrochelatase family.

Its subcellular location is the cytoplasm. The enzyme catalyses heme b + 2 H(+) = protoporphyrin IX + Fe(2+). Its pathway is porphyrin-containing compound metabolism; protoheme biosynthesis; protoheme from protoporphyrin-IX: step 1/1. Functionally, catalyzes the ferrous insertion into protoporphyrin IX. This is Ferrochelatase from Helicobacter pylori (strain P12).